The chain runs to 359 residues: Type-1 angiotensin II receptor B (359 aa).

The Extracellular portion of the chain corresponds to 1–25; it reads MTLNSSTEDGIKRIQDDCPKAGRHN. Asn-4 carries an N-linked (GlcNAc...) asparagine glycan. Positions 15 and 17 each coordinate angiotensin II. Cystine bridges form between Cys-18/Cys-274 and Cys-101/Cys-180. A helical membrane pass occupies residues 26–55; that stretch reads YIFVMIPTLYSIIFVVGIFGNSLVVIVIYF. The Cytoplasmic segment spans residues 56 to 61; sequence YMKLKT. Residues 62-89 form a helical membrane-spanning segment; the sequence is VASVFLLNLALADLCFLLTLPLWAVYTA. Topologically, residues 90-98 are extracellular; the sequence is MEYRWPFGN. A helical transmembrane segment spans residues 99–125; the sequence is HLCKIASASVSFNLYASVFLLTCLSID. At 126-141 the chain is on the cytoplasmic side; that stretch reads RYLAIVHPMKSRLRRT. A helical membrane pass occupies residues 142–165; the sequence is MLVAKVTCIIIWLMAGLASLPAVI. Residues 166-190 lie on the Extracellular side of the membrane; sequence YRNVYFIENTNITVCAFHYESQNST. An angiotensin II-binding site is contributed by Arg-167. Asn-176 carries N-linked (GlcNAc...) asparagine glycosylation. Phe-182, His-183, and Tyr-184 together coordinate angiotensin II. Residue Asn-188 is glycosylated (N-linked (GlcNAc...) asparagine). A helical transmembrane segment spans residues 191–216; it reads LPIGLGLTKNILGFVFPFLIILTSYT. Angiotensin II is bound at residue Lys-199. Over 217–239 the chain is Cytoplasmic; the sequence is LIWKALKKAYKIQKNTPRNDDIF. The helical transmembrane segment at 240–268 threads the bilayer; the sequence is RIIMAIVLFFFFSWVPHQIFTFLDVLIQL. The Extracellular segment spans residues 269 to 278; the sequence is GIIRDCEIAD. The chain crosses the membrane as a helical span at residues 279–304; that stretch reads IVDTAMPITICIAYFNNCLNPLFYGF. Over 305–359 the chain is Cytoplasmic; it reads LGKKFKKYFLQLLKYIPPTAKSHAGLSTKMSTLSYRPSDNMSSSAKKSASFFEVE. A disordered region spans residues 339 to 359; sequence YRPSDNMSSSAKKSASFFEVE. Low complexity predominate over residues 346–359; the sequence is SSSAKKSASFFEVE.

Belongs to the G-protein coupled receptor 1 family. As to quaternary structure, interacts with MAS1. Interacts with ARRB1. Interacts with FLNA (via filamin repeat 21); increases PKA-mediated phosphorylation of FLNA. C-terminal Ser or Thr residues may be phosphorylated. As to expression, is expressed in the liver, kidney, aorta, lung, uterus, ovary, spleen, heart, and vascular smooth muscle cell. Expressed most abundantly in the adrenal gland.

The protein resides in the cell membrane. In terms of biological role, receptor for angiotensin II, a vasoconstricting peptide, which acts as a key regulator of blood pressure and sodium retention by the kidney. The activated receptor in turn couples to G-alpha proteins G(q) (GNAQ, GNA11, GNA14 or GNA15) and thus activates phospholipase C and increases the cytosolic Ca(2+) concentrations, which in turn triggers cellular responses such as stimulation of protein kinase C. This chain is Type-1 angiotensin II receptor B (Agtr1b), found in Rattus norvegicus (Rat).